Consider the following 870-residue polypeptide: Phycobiliprotein ApcE (870 aa).

Cys184 contacts (2R,3E)-phycocyanobilin. PBS-linker domains follow at residues 241–421, 482–665, and 679–856; these read DLQG…FRTI, GAGI…KIEK, and SSLN…KQNR.

Belongs to the phycobilisome linker protein family. Contains one covalently linked bilin chromophore. This protein autochromophorylates (Potential).

The protein resides in the plastid. It is found in the chloroplast thylakoid membrane. In terms of biological role, this protein is postulated to act both as terminal energy acceptor and as a linker polypeptide that stabilizes the phycobilisome architecture. May have intrinsic bilin lyase activity. In Cyanidium caldarium (Red alga), this protein is Phycobiliprotein ApcE (apcE).